We begin with the raw amino-acid sequence, 360 residues long: Phenylalanine--tRNA ligase alpha subunit (360 aa).

Glu-260 contacts Mg(2+).

The protein belongs to the class-II aminoacyl-tRNA synthetase family. Phe-tRNA synthetase alpha subunit type 1 subfamily. Tetramer of two alpha and two beta subunits. Mg(2+) is required as a cofactor.

Its subcellular location is the cytoplasm. The enzyme catalyses tRNA(Phe) + L-phenylalanine + ATP = L-phenylalanyl-tRNA(Phe) + AMP + diphosphate + H(+). This is Phenylalanine--tRNA ligase alpha subunit from Sinorhizobium fredii (strain NBRC 101917 / NGR234).